A 311-amino-acid polypeptide reads, in one-letter code: Peptide methionine sulfoxide reductase MsrA/MsrB (311 aa).

A peptide methionine sulfoxide reductase A region spans residues 1–155; that stretch reads MAEIYLAGGC…PGGYCHINVN (155 aa). Cysteine 10 is a catalytic residue. One can recognise a MsrB domain in the interval 172–295; sequence DAELKEQLTQ…NSAALRFIPK (124 aa). The active-site Nucleophile is the cysteine 284.

It in the N-terminal section; belongs to the MsrA Met sulfoxide reductase family. This sequence in the C-terminal section; belongs to the MsrB Met sulfoxide reductase family.

The enzyme catalyses L-methionyl-[protein] + [thioredoxin]-disulfide + H2O = L-methionyl-(S)-S-oxide-[protein] + [thioredoxin]-dithiol. It catalyses the reaction [thioredoxin]-disulfide + L-methionine + H2O = L-methionine (S)-S-oxide + [thioredoxin]-dithiol. The catalysed reaction is L-methionyl-[protein] + [thioredoxin]-disulfide + H2O = L-methionyl-(R)-S-oxide-[protein] + [thioredoxin]-dithiol. Has an important function as a repair enzyme for proteins that have been inactivated by oxidation. Catalyzes the reversible oxidation-reduction of methionine sulfoxide in proteins to methionine. Involved in protection against oxidative stress when the bacterium enters the host bloodstream and required for maximal growth under aerobic and anaerobic conditions. In Streptococcus gordonii (strain Challis / ATCC 35105 / BCRC 15272 / CH1 / DL1 / V288), this protein is Peptide methionine sulfoxide reductase MsrA/MsrB (msrAB).